Reading from the N-terminus, the 21-residue chain is Protein YnfR (21 aa).

The chain is Protein YnfR from Escherichia coli (strain K12).